A 514-amino-acid chain; its full sequence is Glycosyltransferase-like At3g57200 (514 aa).

Residues Met-1 to Ser-23 are disordered. Positions Met-1–Ala-39 are cleaved as a signal peptide. N-linked (GlcNAc...) asparagine glycans are attached at residues Asn-156, Asn-187, Asn-251, and Asn-460. The disordered stretch occupies residues Pro-457–Leu-514. Residues Ser-458–Glu-473 show a composition bias toward polar residues. The span at Ser-474–Val-490 shows a compositional bias: basic and acidic residues.

Belongs to the glycosyltransferase 25 family.

Its subcellular location is the secreted. It is found in the cell wall. The protein resides in the cytoplasm. The protein localises to the cell membrane. Functionally, involved in the coordination between cell elongation and cellulose synthesis by promoting the expression of genes involved in cell elongation and cellulose synthesis. Acts as a regulator of plasmodesmatal permeability. Maybe a glycosyltransferase. The sequence is that of Glycosyltransferase-like At3g57200 from Arabidopsis thaliana (Mouse-ear cress).